Consider the following 522-residue polypeptide: Wax ester synthase/diacylglycerol acyltransferase 4 (522 aa).

Over residues 1–12 the composition is skewed to basic and acidic residues; the sequence is MEIETRPHISGD. The segment at 1 to 20 is disordered; it reads MEIETRPHISGDEKEEEQPL. The Cytoplasmic segment spans residues 1-205; sequence MEIETRPHIS…SDSRLLWLVK (205 aa). The active-site Proton acceptor is His-149. A helical membrane pass occupies residues 206-226; the sequence is VIWTAVILGLNTVCDALEFIV. The Lumenal portion of the chain corresponds to 227 to 522; it reads TTLFVKDTET…QIAGLLYRML (296 aa). Asn-270 and Asn-409 each carry an N-linked (GlcNAc...) asparagine glycan.

It in the N-terminal section; belongs to the long-chain O-acyltransferase family. As to expression, mostly expressed in roots, flowers and siliques.

Its subcellular location is the cell membrane. The protein localises to the endoplasmic reticulum membrane. The enzyme catalyses an acyl-CoA + a 1,2-diacyl-sn-glycerol = a triacyl-sn-glycerol + CoA. The catalysed reaction is a long chain fatty alcohol + a fatty acyl-CoA = a wax ester + CoA. It functions in the pathway glycerolipid metabolism; triacylglycerol biosynthesis. The protein operates within lipid metabolism. Its function is as follows. Bifunctional wax ester synthase/diacylglycerol acyltransferase. Involved in cuticular wax biosynthesis. The protein is Wax ester synthase/diacylglycerol acyltransferase 4 of Arabidopsis thaliana (Mouse-ear cress).